The primary structure comprises 414 residues: Stork-head box protein ham-1 (414 aa).

The interval 1–31 (MTYLAVVLNGPKAKNGRKVFDSFLEQNRQMF) is essential for association with cell cortex. The Winged helix Storkhead-box1 domain occupies 93–170 (QQVEQMHFVP…MADHYFVSVP (78 aa)). Residues 282–362 (ECQRKARRRN…SNEEAGSISD (81 aa)) are disordered. Residues 285–295 (RKARRRNHPRR) are bi-partite nuclear localization signal. Residues 321–327 (PTRRRAR) are nuclear localization signal. The segment covering 332–351 (LRSSTPNNSDSAYSISPPHT) has biased composition (polar residues).

The protein resides in the cytoplasm. It localises to the cell cortex. It is found in the nucleus. Its function is as follows. Probable transcription factor. Required for asymmetric cell division in neuroblasts, perhaps acting by regulating spindle positioning and myosin polarization, and thus the position of the cleavage plane. Required to produce daughter cell size asymmetry in neuroblasts undergoing asymmetric cell division, usually giving rise to one precursor cell and one apoptotic cell. Positively modulates expression of the serine/threonine kinase pig-1/MELK during asymmetric division of the Q.a neuroblast. Plays a role in neural fate specification in several dopaminergic lineages, including the hermaphrodite-specific neuron (HSN)/phasmid neuron (PHB), acting in concert with the kinase, ham-1, and the T-box protein tbx-2 and the homeobox protein egl-5. The protein is Stork-head box protein ham-1 of Caenorhabditis elegans.